The chain runs to 276 residues: 3-methyl-2-oxobutanoate hydroxymethyltransferase (276 aa).

Positions 46 and 85 each coordinate Mg(2+). 3-methyl-2-oxobutanoate is bound by residues 46–47 (DS), Asp85, and Lys115. Position 117 (Glu117) interacts with Mg(2+). The active-site Proton acceptor is Glu184.

The protein belongs to the PanB family. Homodecamer; pentamer of dimers. Mg(2+) serves as cofactor.

It localises to the cytoplasm. It carries out the reaction 3-methyl-2-oxobutanoate + (6R)-5,10-methylene-5,6,7,8-tetrahydrofolate + H2O = 2-dehydropantoate + (6S)-5,6,7,8-tetrahydrofolate. The protein operates within cofactor biosynthesis; (R)-pantothenate biosynthesis; (R)-pantoate from 3-methyl-2-oxobutanoate: step 1/2. Its function is as follows. Catalyzes the reversible reaction in which hydroxymethyl group from 5,10-methylenetetrahydrofolate is transferred onto alpha-ketoisovalerate to form ketopantoate. This chain is 3-methyl-2-oxobutanoate hydroxymethyltransferase, found in Heliobacterium modesticaldum (strain ATCC 51547 / Ice1).